The sequence spans 437 residues: Enolase (437 aa).

Q162 contacts (2R)-2-phosphoglycerate. The Proton donor role is filled by E204. Mg(2+) is bound by residues D251, E297, and D324. 4 residues coordinate (2R)-2-phosphoglycerate: K349, R378, S379, and K400. The active-site Proton acceptor is K349.

The protein belongs to the enolase family. Mg(2+) serves as cofactor.

The protein resides in the cytoplasm. The protein localises to the secreted. It is found in the cell surface. The catalysed reaction is (2R)-2-phosphoglycerate = phosphoenolpyruvate + H2O. It participates in carbohydrate degradation; glycolysis; pyruvate from D-glyceraldehyde 3-phosphate: step 4/5. Catalyzes the reversible conversion of 2-phosphoglycerate (2-PG) into phosphoenolpyruvate (PEP). It is essential for the degradation of carbohydrates via glycolysis. In Chlorobium limicola (strain DSM 245 / NBRC 103803 / 6330), this protein is Enolase.